We begin with the raw amino-acid sequence, 108 residues long: MGLSLAAYAGAALAEIAGCFAVWAWWRLGASALWLVPGALSLGAFAWLLALTPVEVAGRSYAVYGGIYVAASLLWLWAVEGVRPDRWDMGGAALVLAGAAVILWAPRG.

A run of 4 helical transmembrane segments spans residues 5–25 (LAAY…VWAW), 32–52 (ALWL…LALT), 62–82 (AVYG…VEGV), and 86–106 (RWDM…LWAP).

The protein belongs to the UPF0060 family.

Its subcellular location is the cell inner membrane. This is UPF0060 membrane protein RSKD131_0092 from Cereibacter sphaeroides (strain KD131 / KCTC 12085) (Rhodobacter sphaeroides).